The sequence spans 4466 residues: Dynein beta chain, ciliary (4466 aa).

The tract at residues 1–1813 (MADVVDPRLE…YANICDAQFK (1813 aa)) is stem. An ATP-binding site is contributed by 154 to 161 (AGQVKGKT). 4 coiled-coil regions span residues 733-805 (TVLE…WTKQ), 1036-1056 (TLDQ…EADE), 1306-1337 (WLEI…AWDA), and 1443-1468 (LLKS…MTSK). 4 AAA regions span residues 1814 to 2035 (YSYE…VLVV), 2095 to 2316 (KVVK…VRFK), 2422 to 2669 (ELDP…VFQG), and 2767 to 3016 (TYNE…ERRY). Residues 1852-1859 (GPAGTGKT), 2133-2140 (GNAGTGKS), 2460-2467 (GNAGLGKS), and 2805-2812 (GVGGSGKQ) contribute to the ATP site. 3 coiled-coil regions span residues 3033–3092 (SLLS…QVVG), 3263–3325 (EPKR…SRTI), and 3573–3642 (QERP…EEAK). The segment at 3033 to 3325 (SLLSMKSKEL…QEAEATSRTI (293 aa)) is stalk. AAA regions lie at residues 3409–3636 (LTDD…EISV) and 3846–4072 (VRNF…VLYN).

This sequence belongs to the dynein heavy chain family. Consists of at least two heavy chains (alpha and beta), three intermediate chains and several light chains.

It localises to the cell projection. Its subcellular location is the cilium. It is found in the flagellum. The protein localises to the cytoplasm. The protein resides in the cytoskeleton. It localises to the flagellum axoneme. Its function is as follows. Force generating protein of eukaryotic cilia and flagella. Produces force towards the minus ends of microtubules. Dynein has ATPase activity; the force-producing power stroke is thought to occur on release of ADP. This Tripneustes gratilla (Hawaian sea urchin) protein is Dynein beta chain, ciliary.